The chain runs to 369 residues: Tetraacyldisaccharide 4'-kinase (369 aa).

Residue V68–T75 coordinates ATP.

Belongs to the LpxK family.

It catalyses the reaction a lipid A disaccharide + ATP = a lipid IVA + ADP + H(+). The protein operates within glycolipid biosynthesis; lipid IV(A) biosynthesis; lipid IV(A) from (3R)-3-hydroxytetradecanoyl-[acyl-carrier-protein] and UDP-N-acetyl-alpha-D-glucosamine: step 6/6. In terms of biological role, transfers the gamma-phosphate of ATP to the 4'-position of a tetraacyldisaccharide 1-phosphate intermediate (termed DS-1-P) to form tetraacyldisaccharide 1,4'-bis-phosphate (lipid IVA). In Chlamydia trachomatis serovar D (strain ATCC VR-885 / DSM 19411 / UW-3/Cx), this protein is Tetraacyldisaccharide 4'-kinase.